A 351-amino-acid polypeptide reads, in one-letter code: DNA polymerase IV (351 aa).

The region spanning 4-185 (IIHVDMDCFY…LPLGKIPGVG (182 aa)) is the UmuC domain. 2 residues coordinate Mg(2+): Asp8 and Asp103. Glu104 is a catalytic residue.

This sequence belongs to the DNA polymerase type-Y family. As to quaternary structure, monomer. Requires Mg(2+) as cofactor.

It is found in the cytoplasm. The catalysed reaction is DNA(n) + a 2'-deoxyribonucleoside 5'-triphosphate = DNA(n+1) + diphosphate. Its function is as follows. Poorly processive, error-prone DNA polymerase involved in untargeted mutagenesis. Copies undamaged DNA at stalled replication forks, which arise in vivo from mismatched or misaligned primer ends. These misaligned primers can be extended by PolIV. Exhibits no 3'-5' exonuclease (proofreading) activity. May be involved in translesional synthesis, in conjunction with the beta clamp from PolIII. The protein is DNA polymerase IV of Citrobacter koseri (strain ATCC BAA-895 / CDC 4225-83 / SGSC4696).